The primary structure comprises 240 residues: LexA repressor (240 aa).

The H-T-H motif DNA-binding region spans F26–T46. Residues S161 and K199 each act as for autocatalytic cleavage activity in the active site.

This sequence belongs to the peptidase S24 family. In terms of assembly, homodimer.

It carries out the reaction Hydrolysis of Ala-|-Gly bond in repressor LexA.. In terms of biological role, represses a number of genes involved in the response to DNA damage (SOS response), including recA and lexA. In the presence of single-stranded DNA, RecA interacts with LexA causing an autocatalytic cleavage which disrupts the DNA-binding part of LexA, leading to derepression of the SOS regulon and eventually DNA repair. The protein is LexA repressor of Brucella melitensis biotype 1 (strain ATCC 23456 / CCUG 17765 / NCTC 10094 / 16M).